Here is a 1342-residue protein sequence, read N- to C-terminus: DNA-directed RNA polymerase subunit beta (1342 aa).

It belongs to the RNA polymerase beta chain family. The RNAP catalytic core consists of 2 alpha, 1 beta, 1 beta' and 1 omega subunit. When a sigma factor is associated with the core the holoenzyme is formed, which can initiate transcription.

It catalyses the reaction RNA(n) + a ribonucleoside 5'-triphosphate = RNA(n+1) + diphosphate. Functionally, DNA-dependent RNA polymerase catalyzes the transcription of DNA into RNA using the four ribonucleoside triphosphates as substrates. This is DNA-directed RNA polymerase subunit beta from Glaesserella parasuis serovar 5 (strain SH0165) (Haemophilus parasuis).